We begin with the raw amino-acid sequence, 83 residues long: MKASMFLALAGLVLLFVVGYASESEEKDFPRELLSKIFAVDDFKGEERGCKGFGDSCTPGKNECCPNYACSSKHKWCKVYLGK.

The N-terminal stretch at 1-21 is a signal peptide; sequence MKASMFLALAGLVLLFVVGYA. Positions 22–48 are excised as a propeptide; that stretch reads SESEEKDFPRELLSKIFAVDDFKGEER. Cystine bridges form between Cys-50–Cys-65, Cys-57–Cys-70, and Cys-64–Cys-77. Leu-81 carries the post-translational modification Leucine amide.

This sequence belongs to the neurotoxin 10 (Hwtx-1) family. 15 (Hntx-3) subfamily. In terms of assembly, monomer. Expressed by the venom gland.

It is found in the secreted. In terms of biological role, selective antagonist of neuronal tetrodotoxin (TTX)-sensitive voltage-gated sodium channels (IC(50)=1270 nM on Nav1.1/SCN1A, 270 nM on Nav1.2/SCN2A, 491 nM on Nav1.3/SCN3A and 232 nM on Nav1.7/SCN9A). This toxin suppress Nav1.7 current amplitude without significantly altering the activation, inactivation, and repriming kinetics. Short extreme depolarizations partially activate the toxin-bound channel, indicating voltage-dependent inhibition of this toxin. This toxin increases the deactivation of the Nav1.7 current after extreme depolarizations. The toxin-Nav1.7 complex is gradually dissociated upon prolonged strong depolarizations in a voltage-dependent manner, and the unbound toxin rebinds to Nav1.7 after a long repolarization. Moreover, analysis of chimeric channels showed that the DIIS3-S4 linker is critical for toxin binding to Nav1.7. These data are consistent with this toxin interacting with Nav1.7 site 4 and trapping the domain II voltage sensor in the closed state. The protein is Hainantoxin-III 11 of Cyriopagopus hainanus (Chinese bird spider).